A 715-amino-acid polypeptide reads, in one-letter code: Glycine--tRNA ligase beta subunit (715 aa).

The protein belongs to the class-II aminoacyl-tRNA synthetase family. As to quaternary structure, tetramer of two alpha and two beta subunits.

It is found in the cytoplasm. The enzyme catalyses tRNA(Gly) + glycine + ATP = glycyl-tRNA(Gly) + AMP + diphosphate. This Nitrosomonas eutropha (strain DSM 101675 / C91 / Nm57) protein is Glycine--tRNA ligase beta subunit.